A 270-amino-acid chain; its full sequence is 3-phenylpropionate-dihydrodiol/cinnamic acid-dihydrodiol dehydrogenase (270 aa).

Residue 10–34 (FITGGGSGLGLALVERFIEEGAQVA) coordinates NAD(+). S143 provides a ligand contact to substrate. Residue Y156 is the Proton acceptor of the active site.

The protein belongs to the short-chain dehydrogenases/reductases (SDR) family.

It catalyses the reaction 3-(cis-5,6-dihydroxycyclohexa-1,3-dien-1-yl)propanoate + NAD(+) = 3-(2,3-dihydroxyphenyl)propanoate + NADH + H(+). It carries out the reaction (2E)-3-(cis-5,6-dihydroxycyclohexa-1,3-dien-1-yl)prop-2-enoate + NAD(+) = (2E)-3-(2,3-dihydroxyphenyl)prop-2-enoate + NADH + H(+). Its pathway is aromatic compound metabolism; 3-phenylpropanoate degradation. Its function is as follows. Converts 3-phenylpropionate-dihydrodiol (PP-dihydrodiol) and cinnamic acid-dihydrodiol (CI-dihydrodiol) into 3-(2,3-dihydroxylphenyl)propanoic acid (DHPP) and 2,3-dihydroxicinnamic acid (DHCI), respectively. This Escherichia coli O157:H7 protein is 3-phenylpropionate-dihydrodiol/cinnamic acid-dihydrodiol dehydrogenase.